The sequence spans 261 residues: Protein phosphatase inhibitor 2 (261 aa).

Residues 1–16 (MNKDEEFLEEHHYKDD) show a composition bias toward basic and acidic residues. The tract at residues 1-150 (MNKDEEFLEE…TPYHYYESEE (150 aa)) is required for binding to pppB. The disordered stretch occupies residues 1-261 (MNKDEEFLEE…LNANLSDDEQ (261 aa)). Residues 17-60 (DAIEGEEEQGEEEESDLDDDMYNIDGETNDDDDDDEAEDEESSE) show a composition bias toward acidic residues. Residues 123–134 (LTINDMNKSSTM) show a composition bias toward polar residues. Residues 150–242 (EETDESKKYL…KKFDNLRKAH (93 aa)) are a coiled coil. A compositionally biased stretch (basic and acidic residues) spans 154 to 163 (ESKKYLENKF). A compositionally biased stretch (basic residues) spans 195–206 (DKKKKKKNLKIH). Over residues 212–225 (DDNDDNEDEDEDET) the composition is skewed to acidic residues. The span at 226–250 (EEKKENKKKFDNLRKAHYNEFKVVR) shows a compositional bias: basic and acidic residues.

It belongs to the protein phosphatase inhibitor 2 family. Interacts with pppB.

Its function is as follows. Inhibitor of protein-phosphatase 1 (PP1). This Dictyostelium discoideum (Social amoeba) protein is Protein phosphatase inhibitor 2 (dpiA).